The following is a 560-amino-acid chain: NAD-dependent malic enzyme (560 aa).

Y100 functions as the Proton donor in the catalytic mechanism. R153 contributes to the NAD(+) binding site. K171 acts as the Proton acceptor in catalysis. Residues E242, D243, and D266 each contribute to the a divalent metal cation site. NAD(+)-binding residues include D266 and N413.

Belongs to the malic enzymes family. In terms of assembly, homotetramer. Mg(2+) is required as a cofactor. Requires Mn(2+) as cofactor.

The catalysed reaction is (S)-malate + NAD(+) = pyruvate + CO2 + NADH. The enzyme catalyses oxaloacetate + H(+) = pyruvate + CO2. The polypeptide is NAD-dependent malic enzyme (Psychrobacter arcticus (strain DSM 17307 / VKM B-2377 / 273-4)).